The primary structure comprises 3678 residues: Dystrophin (3678 aa).

The actin-binding stretch occupies residues 1-240; the sequence is MLWWEEVEDC…YITSLFQVLP (240 aa). Calponin-homology (CH) domains are found at residues 15 to 119 and 134 to 240; these read DVQK…LHWQ and TNSE…QVLP. Positions 63 to 72 are ANK2- and ANK-3 binding; that stretch reads PKEKGSTRVH. The disordered stretch occupies residues 313–333; it reads DSTQSPYPSQHLEAPRDKSLD. 24 Spectrin repeats span residues 341 to 449, 450 to 558, 561 to 669, 721 to 830, 832 to 936, 945 to 1047, 1050 to 1156, 1159 to 1265, 1268 to 1369, 1370 to 1465, 1470 to 1570, 1573 to 1678, 1681 to 1780, 1781 to 1876, 1879 to 1981, 1994 to 2103, 2106 to 2210, 2213 to 2318, 2319 to 2416, 2468 to 2570, 2573 to 2679, 2682 to 2795, 2801 to 2923, and 2928 to 3033; these read VNLD…KLHK, VLMD…VLQD, LKWQ…QISQ, ELRK…WLEY, TNII…ELQT, RYQE…KLEE, NKLR…ALKA, DKTV…TLEE, ACWH…LLEQ, SIQS…LFQK, EQRL…QLEK, KLSR…LLLE, KHME…KASI, PLKE…KALE, HQWY…TLHE, DVSY…RFDR, EKWR…RIEE, NVLS…ELEV, HLKD…LRTK, FNRA…QLNE, KDST…ALEE, RLLQ…HLEA, KRLH…RKID, and RLQE…QLHE. Residues 1417–1915 form an interaction with SYNM region; the sequence is SDLTSHEISL…PEPRDERKLK (499 aa). The WW domain occupies 3048 to 3081; sequence TSVQGPWERAISPNKVPYYINHETQTTCWDHPKM. Residues 3051 to 3401 are interaction with SYNM; the sequence is QGPWERAISP…TVLEGDNMET (351 aa). The segment at 3301 to 3357 adopts a ZZ-type; degenerate zinc-finger fold; it reads KHQAKCNICKECPIIGFRYRSLKHFNYDICQSCFFSGRVAKGHKMHYPMVEYCTPTT. The Zn(2+) site is built by cysteine 3306, cysteine 3309, cysteine 3330, and cysteine 3333. The interval 3459–3511 is binds to SNTB1; sequence DDEHLLIQHYCQSLNQDSPLSQPRSPAQILISLESEERGELERILADLEEENR. A phosphoserine mark is found at serine 3476, serine 3483, and serine 3493. Disordered stretches follow at residues 3521–3547 and 3596–3678; these read KQQHEHKGLSPLPSPPEMMPTSPQSPR and EAKV…EDTM. Composition is skewed to polar residues over residues 3600-3619 and 3655-3665; these read NGTTVSSPSTSLQRSDSSQP and QLNNSFPSSRG. Serine 3605, serine 3606, serine 3610, serine 3616, serine 3617, and serine 3659 each carry phosphoserine.

In terms of assembly, interacts with SYNM. Interacts with the syntrophins SNTG1 and SNTG2. Interacts with KRT19. Component of the dystrophin-associated glycoprotein complex which is composed of three subcomplexes: a cytoplasmic complex comprised of DMD (or UTRN), DTNA and a number of syntrophins, such as SNTB1, SNTB2, SNTG1 and SNTG2, the transmembrane dystroglycan complex, and the sarcoglycan-sarcospan complex. Interacts with DAG1 (betaDAG1) with DMD; the interaction is inhibited by phosphorylation on the PPXY motif of DAG1. Interacts with SYNM; SNTA1 and SNTB1. Interacts with CMYA5. Directly interacts with ANK2 and ANK3; these interactions do not interfere with betaDAG1-binding and are necessary for proper localization in muscle cells. Identified in a dystroglycan complex that contains at least PRX, DRP2, UTRN, DMD and DAG1. Interacts with DTNB. Interacts with PGM5; the interaction is direct. Interacts with NOS1; localizes NOS1 to sarcolemma in muscle cells. In terms of tissue distribution, detected in quadriceps muscle and in sciatic nerve (at protein level). Expressed in the sarcolemma of the soleus muscle (at protein level). Differentially expressed during skeletal muscle, heart, and brain development. Also expressed in retina.

The protein resides in the cell membrane. It localises to the sarcolemma. The protein localises to the cytoplasm. Its subcellular location is the cytoskeleton. It is found in the postsynaptic cell membrane. In terms of biological role, anchors the extracellular matrix to the cytoskeleton via F-actin. Ligand for dystroglycan. Component of the dystrophin-associated glycoprotein complex which accumulates at the neuromuscular junction (NMJ) and at a variety of synapses in the peripheral and central nervous systems and has a structural function in stabilizing the sarcolemma. Also implicated in signaling events and synaptic transmission. The protein is Dystrophin (Dmd) of Mus musculus (Mouse).